The chain runs to 2839 residues: Neurofibromin (2839 aa).

Ala-2 is subject to N-acetylalanine. 2 positions are modified to phosphoserine: Ser-864 and Ser-876. The 232-residue stretch at 1251-1482 (HLLYQLLWNM…DAARRFFLDI (232 aa)) folds into the Ras-GAP domain. Residues 1580-1738 (EKEEFKALKT…ATLALEEDLK (159 aa)) form the CRAL-TRIO domain. Positions 1580–1837 (EKEEFKALKT…RTRWELSQPD (258 aa)) are lipid binding. Phosphoserine occurs at positions 2188 and 2467. Thr-2514 carries the post-translational modification Phosphothreonine. A phosphoserine mark is found at Ser-2515, Ser-2521, Ser-2523, and Ser-2543. Positions 2555–2571 (KRQEMESGITTPPKMRR) match the Bipartite nuclear localization signal motif. Thr-2565 carries the post-translational modification Phosphothreonine. 3 positions are modified to phosphoserine: Ser-2597, Ser-2802, and Ser-2817. Positions 2787-2839 (TSQHSPGIDKENVELSPTTGHCNSGRTRHGSASQVQKQRSAGSFKRNSIKKIV) are disordered. Residues 2801–2827 (LSPTTGHCNSGRTRHGSASQVQKQRSA) show a composition bias toward polar residues.

As to quaternary structure, interacts with HTR6. Interacts with SPRED2. In terms of processing, ubiquitinated by RNF7/RBX2, leading to its degradation. Detected in brain, peripheral nerve, lung, colon and muscle.

The protein resides in the nucleus. The protein localises to the nucleolus. It is found in the cell membrane. Its function is as follows. Stimulates the GTPase activity of Ras. NF1 shows greater affinity for Ras GAP, but lower specific activity. May be a regulator of Ras activity. This Homo sapiens (Human) protein is Neurofibromin (NF1).